Consider the following 475-residue polypeptide: Divinyl ether synthase CYP74M1 (475 aa).

Cysteine 427 lines the heme pocket.

The protein belongs to the cytochrome P450 family. Requires heme as cofactor.

The catalysed reaction is (13S)-hydroperoxy-(9Z,11E)-octadecadienoate = etheroleate + H2O. The enzyme catalyses (13S)-hydroperoxy-(9Z,11E,15Z)-octadecatrienoate = etherolenate + H2O. It participates in lipid metabolism; oxylipin biosynthesis. In terms of biological role, divinyl ether synthase involved in oxylipin biosynthesis. Catalyzes the conversion of (13S)-hydroperoxy-(9Z,11E)-octadecadienoate (13-HPOD) to etheroleate and (13S)-hydroperoxy-(9Z,11E,15Z)-octadecatrienoate (13-HPOT) to etherolenate. Has no activity with the corresponding 9-hydroperoxides (9-HPOD and 9-HPOT). The polypeptide is Divinyl ether synthase CYP74M1 (Selaginella moellendorffii (Spikemoss)).